The following is a 178-amino-acid chain: MSVDKAFRDMIRNEIEVQLKPLRDVVARLEEGTADLDALRNVAERLAPLAEVVGPLFGAQIPAAAKAGRRGPGRPPAARSAVTAAPAAVGGKRRGRKPAAAGADGSRACAIIGCGKPSRTKGYCAAHYQKLRMLEKTNRRPSDWKDYADPDSVDDIKLPRGRAASKALAAAAQAGHAG.

Disordered regions lie at residues Ala-67–Gly-102 and Asn-138–Leu-158. Over residues Pro-76 to Gly-90 the composition is skewed to low complexity.

The sequence is that of Vegetative protein (vegA) from Myxococcus xanthus.